Here is a 594-residue protein sequence, read N- to C-terminus: Cytosolic Fe-S cluster assembly factor NAR1 (594 aa).

Cys20, Cys88, Cys91, Cys94, Cys209, and Cys264 together coordinate [4Fe-4S] cluster. The tract at residues 444–465 (RRARMSKSEDSSGASASSMAPA) is disordered. Residues 454–465 (SSGASASSMAPA) are compositionally biased toward low complexity. [4Fe-4S] cluster-binding residues include Cys481 and Cys485. The segment at 492 to 511 (IAAPAPTSTPPAAPAPAHAA) is disordered.

Belongs to the NARF family.

Its function is as follows. Component of the cytosolic Fe/S protein assembly machinery. Required for maturation of extramitochondrial Fe/S proteins. May play a role in the transfer of pre-assembled Fe/S clusters to target apoproteins. This Lodderomyces elongisporus (strain ATCC 11503 / CBS 2605 / JCM 1781 / NBRC 1676 / NRRL YB-4239) (Yeast) protein is Cytosolic Fe-S cluster assembly factor NAR1 (NAR1).